A 287-amino-acid polypeptide reads, in one-letter code: Bifunctional protein FolD (287 aa).

NADP(+) contacts are provided by residues 168–170 (GRS), Ser-193, and Ile-234.

This sequence belongs to the tetrahydrofolate dehydrogenase/cyclohydrolase family. Homodimer.

It catalyses the reaction (6R)-5,10-methylene-5,6,7,8-tetrahydrofolate + NADP(+) = (6R)-5,10-methenyltetrahydrofolate + NADPH. The enzyme catalyses (6R)-5,10-methenyltetrahydrofolate + H2O = (6R)-10-formyltetrahydrofolate + H(+). Its pathway is one-carbon metabolism; tetrahydrofolate interconversion. Functionally, catalyzes the oxidation of 5,10-methylenetetrahydrofolate to 5,10-methenyltetrahydrofolate and then the hydrolysis of 5,10-methenyltetrahydrofolate to 10-formyltetrahydrofolate. This is Bifunctional protein FolD from Clostridioides difficile (strain 630) (Peptoclostridium difficile).